An 89-amino-acid chain; its full sequence is Small ribosomal subunit protein bS20 (89 aa).

Over residues 1–11 (MANHKSAEKRN) the composition is skewed to basic and acidic residues. The interval 1–30 (MANHKSAEKRNRQNQVARLRNKSTRTAMKN) is disordered.

It belongs to the bacterial ribosomal protein bS20 family.

Its function is as follows. Binds directly to 16S ribosomal RNA. This is Small ribosomal subunit protein bS20 from Desulfotalea psychrophila (strain LSv54 / DSM 12343).